A 295-amino-acid polypeptide reads, in one-letter code: Tyrosine recombinase XerD (295 aa).

The Core-binding (CB) domain maps to 1-85 (MNTIIEEYLN…TIRSFHQFAL (85 aa)). One can recognise a Tyr recombinase domain in the interval 106–289 (KLPDVLEIDE…SKSQIRKMYT (184 aa)). Active-site residues include R146, K170, H241, R244, and H267. Residue Y276 is the O-(3'-phospho-DNA)-tyrosine intermediate of the active site.

The protein belongs to the 'phage' integrase family. XerD subfamily. Forms a cyclic heterotetrameric complex composed of two molecules of XerC and two molecules of XerD.

Its subcellular location is the cytoplasm. Site-specific tyrosine recombinase, which acts by catalyzing the cutting and rejoining of the recombining DNA molecules. The XerC-XerD complex is essential to convert dimers of the bacterial chromosome into monomers to permit their segregation at cell division. It also contributes to the segregational stability of plasmids. The protein is Tyrosine recombinase XerD of Staphylococcus epidermidis (strain ATCC 12228 / FDA PCI 1200).